Here is a 431-residue protein sequence, read N- to C-terminus: Serine hydroxymethyltransferase 3 (431 aa).

(6S)-5,6,7,8-tetrahydrofolate-binding positions include leucine 131 and 135–137 (GHL). Lysine 240 bears the N6-(pyridoxal phosphate)lysine mark.

This sequence belongs to the SHMT family. In terms of assembly, homodimer. The cofactor is pyridoxal 5'-phosphate.

Its subcellular location is the cytoplasm. The catalysed reaction is (6R)-5,10-methylene-5,6,7,8-tetrahydrofolate + glycine + H2O = (6S)-5,6,7,8-tetrahydrofolate + L-serine. It functions in the pathway one-carbon metabolism; tetrahydrofolate interconversion. Its pathway is amino-acid biosynthesis; glycine biosynthesis; glycine from L-serine: step 1/1. In terms of biological role, catalyzes the reversible interconversion of serine and glycine with tetrahydrofolate (THF) serving as the one-carbon carrier. This reaction serves as the major source of one-carbon groups required for the biosynthesis of purines, thymidylate, methionine, and other important biomolecules. Also exhibits THF-independent aldolase activity toward beta-hydroxyamino acids, producing glycine and aldehydes, via a retro-aldol mechanism. This is Serine hydroxymethyltransferase 3 from Colwellia psychrerythraea (strain 34H / ATCC BAA-681) (Vibrio psychroerythus).